Consider the following 543-residue polypeptide: MTATPARRTSLASPATKPVAGGLALAFLATLAGGALLALALEAGGGGFDAAANFDTYLWRVARFTIWQAVASSLLSVLFAIPIARALYAEARFPGRGLILRLFALPLALPALVAVLGVTSIYGRNGLIAHISDMLGHPMQPDIYGIAGILIAHIFFNMPLAVRLLLAAYESIPDDHWKLAAQLGMGSRARFRLIEWPVIRRSLPGMIGLVFMLCVTSFTTVLTLGGGPRATTLEVAIYQSLHFDFDPARAVALTFTQLALTLLILLILRLTGRPSEEGFTQTATPRRYGSPRKTERLFNIIVIALGFLYVALPIAGVVVSGLTADLVRLLSERIVWHAIATSLALGFSAALLAVFLSLALVAAREATRNARIANIFDTGASLILVMPPIVIGAGWFILLRHFTDPFVMAPLMVVTVNAAMAMPFAVRLLRPAWDTAASRHNKLCSQLGIKGFNRLRLIDWPSIRRPCGMAFAFAMALSLGDLGTIALFGSDALVTLPYLLLQRMGSYRTFDAAGLALILGVLCLALMMIADRAAASRKEAFLQ.

Helical transmembrane passes span 19-39, 64-84, 102-122, 142-162, 205-225, 250-270, 300-320, 343-363, 379-399, 406-426, 468-488, and 510-530; these read VAGG…LLAL, FTIW…IPIA, LFAL…TSIY, DIYG…PLAV, GMIG…LTLG, AVAL…ILRL, IIVI…VVVS, LALG…LVAA, GASL…FILL, FVMA…PFAV, GMAF…IALF, and FDAA…MMIA. The ABC transmembrane type-1 1 domain maps to 62-266; the sequence is ARFTIWQAVA…QLALTLLILL (205 aa). Residues 339-530 enclose the ABC transmembrane type-1 2 domain; sequence IATSLALGFS…VLCLALMMIA (192 aa).

This sequence belongs to the binding-protein-dependent transport system permease family. CysTW subfamily. In terms of assembly, the complex is composed of two ATP-binding proteins (ThiQ), two transmembrane proteins (ThiP) and a solute-binding protein (ThiB).

It is found in the cell inner membrane. Part of the ABC transporter complex ThiBPQ involved in thiamine import. Probably responsible for the translocation of the substrate across the membrane. The polypeptide is Thiamine transport system permease protein ThiP (thiP) (Brucella abortus (strain 2308)).